Consider the following 411-residue polypeptide: LL-diaminopimelate aminotransferase (411 aa).

Positions 15 and 42 each coordinate substrate. Pyridoxal 5'-phosphate contacts are provided by residues Tyr72, 108–109 (AK), Tyr132, Asn187, Tyr218, and 246–248 (SFS). The substrate site is built by Lys109, Tyr132, and Asn187. Lys249 carries the post-translational modification N6-(pyridoxal phosphate)lysine. Pyridoxal 5'-phosphate-binding residues include Arg257 and Asn292. Substrate contacts are provided by Asn292 and Arg388.

The protein belongs to the class-I pyridoxal-phosphate-dependent aminotransferase family. LL-diaminopimelate aminotransferase subfamily. As to quaternary structure, homodimer. Pyridoxal 5'-phosphate serves as cofactor.

It carries out the reaction (2S,6S)-2,6-diaminopimelate + 2-oxoglutarate = (S)-2,3,4,5-tetrahydrodipicolinate + L-glutamate + H2O + H(+). Its pathway is amino-acid biosynthesis; L-lysine biosynthesis via DAP pathway; LL-2,6-diaminopimelate from (S)-tetrahydrodipicolinate (aminotransferase route): step 1/1. Functionally, involved in the synthesis of meso-diaminopimelate (m-DAP or DL-DAP), required for both lysine and peptidoglycan biosynthesis. Catalyzes the direct conversion of tetrahydrodipicolinate to LL-diaminopimelate. This Crocosphaera subtropica (strain ATCC 51142 / BH68) (Cyanothece sp. (strain ATCC 51142)) protein is LL-diaminopimelate aminotransferase.